Reading from the N-terminus, the 488-residue chain is Ribosomal protein uS12 methylthiotransferase RimO (488 aa).

In terms of domain architecture, MTTase N-terminal spans 4-120; the sequence is RKVHFVSLGC…LGRVLAGDAE (117 aa). Cys-13, Cys-49, Cys-83, Cys-155, Cys-159, and Cys-162 together coordinate [4Fe-4S] cluster. Positions 141–377 constitute a Radical SAM core domain; that stretch reads STPGGSAYVK…MTLQRRISHK (237 aa). Positions 380 to 448 constitute a TRAM domain; the sequence is AAMIGRELEV…DYDLVGELLD (69 aa).

This sequence belongs to the methylthiotransferase family. RimO subfamily. [4Fe-4S] cluster is required as a cofactor.

The protein resides in the cytoplasm. It catalyses the reaction L-aspartate(89)-[ribosomal protein uS12]-hydrogen + (sulfur carrier)-SH + AH2 + 2 S-adenosyl-L-methionine = 3-methylsulfanyl-L-aspartate(89)-[ribosomal protein uS12]-hydrogen + (sulfur carrier)-H + 5'-deoxyadenosine + L-methionine + A + S-adenosyl-L-homocysteine + 2 H(+). Catalyzes the methylthiolation of an aspartic acid residue of ribosomal protein uS12. The sequence is that of Ribosomal protein uS12 methylthiotransferase RimO from Sorangium cellulosum (strain So ce56) (Polyangium cellulosum (strain So ce56)).